We begin with the raw amino-acid sequence, 116 residues long: Integration host factor subunit alpha (116 aa).

2 disordered regions span residues 58-80 (FGNF…GETI) and 94-116 (QKLK…EAAE). Over residues 94–105 (QKLKSTVEQSGN) the composition is skewed to polar residues.

Belongs to the bacterial histone-like protein family. As to quaternary structure, heterodimer of an alpha and a beta chain.

This protein is one of the two subunits of integration host factor, a specific DNA-binding protein that functions in genetic recombination as well as in transcriptional and translational control. This is Integration host factor subunit alpha from Bordetella avium (strain 197N).